We begin with the raw amino-acid sequence, 131 residues long: Small ribosomal subunit protein uS8 (131 aa).

It belongs to the universal ribosomal protein uS8 family. As to quaternary structure, part of the 30S ribosomal subunit. Contacts proteins S5 and S12.

In terms of biological role, one of the primary rRNA binding proteins, it binds directly to 16S rRNA central domain where it helps coordinate assembly of the platform of the 30S subunit. This is Small ribosomal subunit protein uS8 from Wolbachia pipientis subsp. Culex pipiens (strain wPip).